Consider the following 318-residue polypeptide: BES1/BZR1 homolog protein 2 (318 aa).

The span at 1 to 13 (MAAGGGGGGGGSS) shows a compositional bias: gly residues. Disordered stretches follow at residues 1–34 (MAAG…RRRR), 84–133 (FKPP…PSPS), 166–195 (NSAP…PNGG), and 209–231 (APSS…CDES). The tract at residues 16-97 (RTPTWKEREN…ASDISGTPTN (82 aa)) is required for DNA-binding. Polar residues predominate over residues 91-101 (ISGTPTNFSTN). The segment covering 102–133 (SSIQPSPQSSAFPSPAPSYHGSPVSSSFPSPS) has biased composition (low complexity).

It belongs to the BZR/LAT61 family. Phosphorylated. Phosphorylation increases protein degradation.

The sequence is that of BES1/BZR1 homolog protein 2 (BEH2) from Arabidopsis thaliana (Mouse-ear cress).